The following is a 232-amino-acid chain: 2-C-methyl-D-erythritol 4-phosphate cytidylyltransferase (232 aa).

This sequence belongs to the IspD/TarI cytidylyltransferase family. IspD subfamily.

It carries out the reaction 2-C-methyl-D-erythritol 4-phosphate + CTP + H(+) = 4-CDP-2-C-methyl-D-erythritol + diphosphate. The protein operates within isoprenoid biosynthesis; isopentenyl diphosphate biosynthesis via DXP pathway; isopentenyl diphosphate from 1-deoxy-D-xylulose 5-phosphate: step 2/6. Its function is as follows. Catalyzes the formation of 4-diphosphocytidyl-2-C-methyl-D-erythritol from CTP and 2-C-methyl-D-erythritol 4-phosphate (MEP). This Geobacter metallireducens (strain ATCC 53774 / DSM 7210 / GS-15) protein is 2-C-methyl-D-erythritol 4-phosphate cytidylyltransferase.